The following is a 158-amino-acid chain: SUMO-conjugating enzyme UBC9 (158 aa).

The UBC core domain occupies 4–157 (IALSRLAQER…VRAQAKKFAP (154 aa)). Residues 13–18 (RKAWRK) form an interaction with SUMO1 region. Catalysis depends on cysteine 93, which acts as the Glycyl thioester intermediate.

Belongs to the ubiquitin-conjugating enzyme family. As to quaternary structure, interacts with SOX9.

The protein localises to the nucleus. The protein resides in the cytoplasm. It participates in protein modification; protein sumoylation. In terms of biological role, accepts the ubiquitin-like proteins SUMO1, SUMO2 and SUMO3 from the UBLE1A-UBLE1B E1 complex and catalyzes their covalent attachment to other proteins with the help of an E3 ligase such as RANBP2 or CBX4. Essential for nuclear architecture and chromosome segregation. The polypeptide is SUMO-conjugating enzyme UBC9 (UBE2I) (Gallus gallus (Chicken)).